A 285-amino-acid polypeptide reads, in one-letter code: Probable endonuclease 4 (285 aa).

Zn(2+) is bound by residues His-69, His-109, Glu-145, Asp-179, His-182, His-216, Asp-229, His-231, and Glu-261.

This sequence belongs to the AP endonuclease 2 family. Zn(2+) serves as cofactor.

It carries out the reaction Endonucleolytic cleavage to 5'-phosphooligonucleotide end-products.. Its function is as follows. Endonuclease IV plays a role in DNA repair. It cleaves phosphodiester bonds at apurinic or apyrimidinic (AP) sites, generating a 3'-hydroxyl group and a 5'-terminal sugar phosphate. This Escherichia coli O1:K1 / APEC protein is Probable endonuclease 4.